We begin with the raw amino-acid sequence, 116 residues long: Peptidyl-tRNA hydrolase (116 aa).

It belongs to the PTH2 family.

The protein localises to the cytoplasm. It carries out the reaction an N-acyl-L-alpha-aminoacyl-tRNA + H2O = an N-acyl-L-amino acid + a tRNA + H(+). The natural substrate for this enzyme may be peptidyl-tRNAs which drop off the ribosome during protein synthesis. The chain is Peptidyl-tRNA hydrolase from Methanococcus maripaludis (strain C6 / ATCC BAA-1332).